The sequence spans 158 residues: uncharacterized protein (158 aa).

A helical membrane pass occupies residues 33 to 53 (VLAAVPQLGAAKVLVLLLLGV).

It localises to the membrane. This is an uncharacterized protein from Saccharomyces cerevisiae (strain ATCC 204508 / S288c) (Baker's yeast).